The chain runs to 467 residues: Asparagine--tRNA ligase (467 aa).

This sequence belongs to the class-II aminoacyl-tRNA synthetase family. Homodimer.

Its subcellular location is the cytoplasm. It catalyses the reaction tRNA(Asn) + L-asparagine + ATP = L-asparaginyl-tRNA(Asn) + AMP + diphosphate + H(+). The sequence is that of Asparagine--tRNA ligase from Haemophilus influenzae (strain ATCC 51907 / DSM 11121 / KW20 / Rd).